The chain runs to 20 residues: Protein PR-L1 (20 aa).

Belongs to the BetVI family.

The polypeptide is Protein PR-L1 (Lupinus luteus (European yellow lupine)).